Reading from the N-terminus, the 69-residue chain is Large ribosomal subunit protein bL28 (69 aa).

This sequence belongs to the bacterial ribosomal protein bL28 family.

This is Large ribosomal subunit protein bL28 from Nitratidesulfovibrio vulgaris (strain ATCC 29579 / DSM 644 / CCUG 34227 / NCIMB 8303 / VKM B-1760 / Hildenborough) (Desulfovibrio vulgaris).